We begin with the raw amino-acid sequence, 85 residues long: MKVTLIAILTCAAVLALHTTAAEELEAESQLMEVGMPDTELAAVDEERLFECSVSCEIEKEGNKDCKKKKCKGGWECKFNMCVKV.

The N-terminal stretch at M1–A22 is a signal peptide. A propeptide spanning residues E23–R48 is cleaved from the precursor. 3 disulfides stabilise this stretch: C52/C66, C56/C77, and C71/C82.

This sequence belongs to the neurotoxin 12 (Hwtx-2) family. 02 (Hwtx-2) subfamily. As to expression, expressed by the venom gland.

It is found in the secreted. Its function is as follows. Postsynaptic neurotoxin. The polypeptide is U4-theraphotoxin-Hhn1w (Cyriopagopus hainanus (Chinese bird spider)).